A 458-amino-acid polypeptide reads, in one-letter code: MTLAIIGGGPAGYAAAVSAAQQGRNVLLIDKGKLGGTCLNEGCIPTKSLLESANVLDKIKHADSFGIELPAGAISVDWSKMQSRKQQVVSQLVQGVQYLMKKNQIQVVKGTASFLSERKLLIEGENGKEIREADQVLIASGSEPIELPFAPFDGEWILDSKDALSLSEIPSSLVIVGGGVIGCEYAGLFARLGSQVTIIETADRLIPAEDEDIARLFQEKLEEDGVEVHTSSRLGRVDQTAKTAIWKSGQREFKTKADYVLVAIGRKPRLDGLQLEQAGVDFSPKGIPVNGHMQTNVPHIYACGDAIGGIQLAHAAFHEGIIAASHASGRDVKINEKHVPRCIYTSPEIACIGMTERQARSIYGDVKIGEFSFSANGKALIKQQAEGKVKIMAEPEFGEIVGVSMIGPDVTELIGQAAAIMNGEMTADMAEHFIAAHPTLSETLHEALLSTIGLAVHA.

FAD is bound by residues 30–38 (DKGKLGGTC), Lys47, and Ala112. A disulfide bond links Cys38 and Cys43. NAD(+) contacts are provided by residues 177–181 (GGGVI), Glu200, and 263–266 (AIGR). Asp305 and Ala313 together coordinate FAD. His437 functions as the Proton acceptor in the catalytic mechanism.

Belongs to the class-I pyridine nucleotide-disulfide oxidoreductase family. As to quaternary structure, homodimer. The cofactor is FAD.

It is found in the cytoplasm. It catalyses the reaction N(6)-[(R)-dihydrolipoyl]-L-lysyl-[protein] + NAD(+) = N(6)-[(R)-lipoyl]-L-lysyl-[protein] + NADH + H(+). It participates in ketone degradation; acetoin degradation. The chain is Dihydrolipoyl dehydrogenase (acoL) from Bacillus subtilis (strain 168).